A 656-amino-acid chain; its full sequence is Pyoverdine export ATP-binding/permease protein PvdT (656 aa).

The ABC transporter domain maps to 6–245 (IDLRGIRKSY…SANPAALQAV (240 aa)). 43-50 (GASGSGKS) serves as a coordination point for ATP. The next 4 membrane-spanning stretches (helical) occupy residues 284-304 (ALTLLGIVIGVASVVVMLAVG), 538-558 (IAAISLLVGGIGVMNIMLMTV), 589-609 (LSVVGGLAGIVLALAMGAALL), and 619-639 (LSAVIGAFACALVTGVIFGFM).

This sequence belongs to the ABC transporter superfamily. Macrolide exporter (TC 3.A.1.122) family. In terms of assembly, part of the tripartite efflux system PvdRT-OpmQ, which is composed of an inner membrane component with both ATPase and permease domains, PvdT, a periplasmic membrane fusion protein, PvdR, and an outer membrane component, OpmQ.

The protein resides in the cell inner membrane. In terms of biological role, part of the tripartite efflux system PvdRT-OpmQ required for the secretion into the extracellular milieu of the siderophore pyoverdine (PVD), which is involved in iron acquisition. This subunit binds PVD and drives its secretion by hydrolyzing ATP. The system is responsible for export of newly synthesized PVD after the final steps of biosynthesis have taken place in the periplasm. It is also responsible for recycling of PVD after internalization of ferri-PVD into the periplasm by the outer-membrane receptor FpvA and release of iron from PVD, thus making PVD available for new cycles of iron uptake. This Pseudomonas syringae pv. tomato (strain ATCC BAA-871 / DC3000) protein is Pyoverdine export ATP-binding/permease protein PvdT.